Here is a 463-residue protein sequence, read N- to C-terminus: GTPase Der (463 aa).

2 EngA-type G domains span residues 2-164 (KKII…PKSK) and 198-369 (IKIG…KNYT). GTP-binding positions include 8 to 15 (GRPNVGKS), 55 to 59 (DSGGL), 116 to 119 (NKVD), 204 to 211 (GRVNVGKS), 251 to 255 (DTAGI), and 315 to 318 (NKWD). One can recognise a KH-like domain in the interval 370–454 (QKMKTSRLNE…PVILIPKNRS (85 aa)).

It belongs to the TRAFAC class TrmE-Era-EngA-EngB-Septin-like GTPase superfamily. EngA (Der) GTPase family. Associates with the 50S ribosomal subunit.

GTPase that plays an essential role in the late steps of ribosome biogenesis. This Campylobacter fetus subsp. fetus (strain 82-40) protein is GTPase Der.